Here is a 428-residue protein sequence, read N- to C-terminus: Putative aspergillopepsin A-like aspartic endopeptidase AFUA_2G15950 (428 aa).

A signal peptide spans 1 to 19 (MHSLQSFLFLLLLGYGVFA). Positions 20-90 (APTSPQAQSQ…GTAANLVTDV (71 aa)) are cleaved as a propeptide — activation peptide. The region spanning 110 to 425 (FVSPVTIGGQ…DLRGPSIGLA (316 aa)) is the Peptidase A1 domain. Asp126 is a catalytic residue. Asn276 carries N-linked (GlcNAc...) asparagine glycosylation. Residue Asp312 is part of the active site. Asn380 carries an N-linked (GlcNAc...) asparagine glycan.

It belongs to the peptidase A1 family.

The protein resides in the secreted. This Aspergillus fumigatus (strain ATCC MYA-4609 / CBS 101355 / FGSC A1100 / Af293) (Neosartorya fumigata) protein is Putative aspergillopepsin A-like aspartic endopeptidase AFUA_2G15950.